The sequence spans 204 residues: Molybdenum cofactor guanylyltransferase (204 aa).

GTP contacts are provided by residues 12–14, lysine 25, asparagine 53, aspartate 71, and aspartate 101; that span reads LAG. Position 101 (aspartate 101) interacts with Mg(2+).

This sequence belongs to the MobA family. Monomer. It depends on Mg(2+) as a cofactor.

It localises to the cytoplasm. The catalysed reaction is Mo-molybdopterin + GTP + H(+) = Mo-molybdopterin guanine dinucleotide + diphosphate. Transfers a GMP moiety from GTP to Mo-molybdopterin (Mo-MPT) cofactor (Moco or molybdenum cofactor) to form Mo-molybdopterin guanine dinucleotide (Mo-MGD) cofactor. This Ralstonia pickettii (strain 12J) protein is Molybdenum cofactor guanylyltransferase.